Here is a 223-residue protein sequence, read N- to C-terminus: DNA-directed RNA polymerase III subunit RPC7 (223 aa).

The interval 110–223 (MMPRNKCKKA…SDDNMDEATY (114 aa)) is disordered. Residues 114 to 125 (NKCKKAGPKPKK) show a composition bias toward basic residues. Thr-133 is subject to Phosphothreonine. Positions 140 to 155 (DVLKKMEELEKRGDGE) are enriched in basic and acidic residues. Ser-157 carries the post-translational modification Phosphoserine. The span at 164-173 (KEGSKEKSKE) shows a compositional bias: basic and acidic residues. Composition is skewed to acidic residues over residues 174-198 (GDDD…EEND) and 205-223 (EDGD…EATY).

This sequence belongs to the eukaryotic RPC7 RNA polymerase subunit family. Component of the RNA polymerase III complex consisting of 17 subunits: a ten-subunit horseshoe-shaped catalytic core composed of POLR3A/RPC1, POLR3B/RPC2, POLR1C/RPAC1, POLR1D/RPAC2, POLR3K/RPC10, POLR2E/RPABC1, POLR2F/RPABC2, POLR2H/RPABC3, POLR2K/RPABC4 and POLR2L/RPABC5; a mobile stalk composed of two subunits POLR3H/RPC8 and CRCP/RPC9, protruding from the core and functioning primarily in transcription initiation; and additional subunits homologous to general transcription factors of the RNA polymerase II machinery, POLR3C/RPC3-POLR3F/RPC6-POLR3G/RPC7 heterotrimer required for transcription initiation and POLR3D/RPC4-POLR3E/RPC5 heterodimer involved in both transcription initiation and termination. Directly interacts with POLR3C/RPC62. Also found in a trimeric complex with POLR3C/RPC3 and POLR3GL. In terms of tissue distribution, barely detectable in differentiated tissues. Expressed in embryonic stem cells and in other dividing cells, such as some tumor cell lines.

It localises to the nucleus. The protein localises to the cytoplasm. In terms of biological role, DNA-dependent RNA polymerase catalyzes the transcription of DNA into RNA using the four ribonucleoside triphosphates as substrates. Specific peripheric component of RNA polymerase III (Pol III) which synthesizes small non-coding RNAs including 5S rRNA, snRNAs, tRNAs and miRNAs from at least 500 distinct genomic loci. Acts as a long tether that bridges POLR3C/RPC3-POLR3F/RPC6-POLR3G/RPC7 heterotrimer and the mobile stalk of Pol III, coordinating the dynamics of Pol III stalk and clamp modules during the transition from apo to elongation state. Pol III exists as two alternative complexes defined by the mutually exclusive incorporation of subunit POLR3G/RPC7alpha or POLR3GL/RPC7beta. POLR3G/RPC7alpha modulates Pol III transcriptome by specifically enhancing the transcription of snaR-A non-coding RNAs. At resting state, occupies the active site of apo Pol III and keeps Pol III in an autoinhibitory mode, preventing non-specific transcription. Pol III plays a key role in sensing and limiting infection by intracellular bacteria and DNA viruses. Acts as a nuclear and cytosolic DNA sensor involved in innate immune response. Can sense non-self dsDNA that serves as template for transcription into dsRNA. The non-self RNA polymerase III transcripts, such as Epstein-Barr virus-encoded RNAs (EBERs), induce type I interferon and NF-kappa-B through the RIG-I pathway. In Homo sapiens (Human), this protein is DNA-directed RNA polymerase III subunit RPC7.